Reading from the N-terminus, the 544-residue chain is Tyrosine-protein kinase fynb (544 aa).

Gly-2 is lipidated: N-myristoyl glycine. 2 S-palmitoyl cysteine lipidation sites follow: Cys-3 and Cys-6. Positions 89 to 150 constitute an SH3 domain; the sequence is TGVTLFVALY…PSNYVAPVDS (62 aa). Residues 156–253 enclose the SH2 domain; sequence WYFGKLGRKD…GLCCRLVVPC (98 aa). The Protein kinase domain occupies 278-531; the sequence is LQLIKRLGNG…YLQAFLEDYF (254 aa). Residues 284 to 292 and Lys-306 each bind ATP; that span reads LGNGQFGEV. Catalysis depends on Asp-397, which acts as the Proton acceptor. At Tyr-427 the chain carries Phosphotyrosine; by autocatalysis. Phosphotyrosine is present on Tyr-538.

This sequence belongs to the protein kinase superfamily. Tyr protein kinase family. SRC subfamily. The cofactor is Mn(2+).

It is found in the cytoplasm. It catalyses the reaction L-tyrosyl-[protein] + ATP = O-phospho-L-tyrosyl-[protein] + ADP + H(+). With respect to regulation, inhibited by phosphorylation of Tyr-538 by leukocyte common antigen and activated by dephosphorylation of this site. Its function is as follows. Tyrosine-protein kinase implicated in the control of cell growth. Plays a role in the regulation of intracellular calcium levels. Required in brain development and mature brain function with important roles in the regulation of axon growth, axon guidance, and neurite extension. Role in CNTN1-mediated signaling. The chain is Tyrosine-protein kinase fynb (fynb) from Danio rerio (Zebrafish).